We begin with the raw amino-acid sequence, 670 residues long: Acetolactate synthase, chloroplastic (670 aa).

2 stretches are compositionally biased toward low complexity: residues 1–48 (MAAA…SSSS) and 55–77 (KSSS…TTPS). The transit peptide at 1-55 (MAAATTTTTTSSSISFSTKPSPSSSKSPLPISRFSLPFSLNPNKSSSSSRRRGIK) directs the protein to the chloroplast. A disordered region spans residues 1–94 (MAAATTTTTT…ETFISRFAPD (94 aa)). Residue Glu-144 participates in thiamine diphosphate binding. Ser-186 contributes to the FAD binding site. Thiamine diphosphate is bound at residue Gln-207. 2 residues coordinate (R)-imazaquin: Lys-220 and Arg-246. Arg-246 contacts FAD. Lys-256 is a binding site for chlorimuron-ethyl. FAD contacts are provided by residues Gly-308 and 331 to 332 (TL). Cysteine sulfinic acid (-SO2H) is present on Cys-340. FAD contacts are provided by residues 349–352 (LGMH) and 371–375 (GVRFD). 376-377 (DR) serves as a coordination point for chlorimuron-ethyl. FAD contacts are provided by residues 395 to 396 (DI) and 414 to 415 (DV). The stretch at 414 to 446 (DVKLALQGMNKVLENRAEELKLDFGVWRNELNV) forms a coiled coil. 487–488 (QH) lines the thiamine diphosphate pocket. 508 to 509 (GG) lines the FAD pocket. Thiamine diphosphate is bound by residues 511–513 (GAM), 538–540 (DGS), and 565–570 (NQHLGM). The Mg(2+) site is built by Asp-538, Asn-565, and His-567. Positions 574 and 653 each coordinate chlorimuron-ethyl.

The protein belongs to the TPP enzyme family. In terms of assembly, homodimer or homotetramer. The acetolactate synthase complex contains both large catalytic subunits and small regulatory subunits. Homodimer. The acetolactate synthase complex contains 4 homodimers of the large catalytic subunits, and 1 homotetramer of the small regulatory subunits. Mg(2+) serves as cofactor. The cofactor is FAD. It depends on thiamine diphosphate as a cofactor.

It is found in the plastid. The protein localises to the chloroplast. It carries out the reaction 2 pyruvate + H(+) = (2S)-2-acetolactate + CO2. Its pathway is amino-acid biosynthesis; L-isoleucine biosynthesis; L-isoleucine from 2-oxobutanoate: step 1/4. It participates in amino-acid biosynthesis; L-valine biosynthesis; L-valine from pyruvate: step 1/4. Inhibited by asymmetric aryl disulfides, triazolopyrimidine sulfonanilide compounds, isatin derivatives, and sulfonylurea and imidazolinone herbicides. Insensitive to feed-back inhibition by branched-chain amino acids. Its function is as follows. Catalyzes the formation of acetolactate from pyruvate, the first step in valine and isoleucine biosynthesis. This chain is Acetolactate synthase, chloroplastic (ALS), found in Arabidopsis thaliana (Mouse-ear cress).